The following is a 403-amino-acid chain: TBC1 domain family member 20 (403 aa).

The tract at residues 1–25 is disordered; the sequence is MALRSAQGDGPTSGHWDGGAEKADF. The Rab-GAP TBC domain maps to 60–246; that stretch reads LLTDEIRRKV…RLYDFFLACH (187 aa). A run of 2 helical transmembrane segments spans residues 238 to 258 and 367 to 387; these read LYDF…AVIV and FVKL…LAVV.

As to quaternary structure, (Microbial infection) Directly interacts with the N-terminal amphipathic helix of hepatitis C virus (HCV) NS5A.

It localises to the membrane. Its function is as follows. GTPase-activating protein (GAP) specific for Rab1 and Rab2 small GTPase families for which it can accelerate the intrinsic GTP hydrolysis rate by more than five orders of magnitude. Also shows GAP activity for RAB18 GTPase. Promotes RAB18 dissociation from the endoplasmic reticulum (ER) membrane into the cytosol, probably through stimulating RAB18 GTP-hydrolysis. Involved in maintaining endoplasmic reticulum structure. The polypeptide is TBC1 domain family member 20 (Homo sapiens (Human)).